Reading from the N-terminus, the 285-residue chain is Zinc transporter ZupT (285 aa).

3 helical membrane passes run 13–33 (AFLL…IAFF), 41–61 (FLCV…MIEM), and 80–100 (WITV…DKFV). Asn-153 and Glu-156 together coordinate Fe(2+). Residue Glu-156 coordinates Zn(2+). A helical transmembrane segment spans residues 160–180 (TFVSALEGASLAIPITIAIAI). A Zn(2+)-binding site is contributed by His-181. Fe(2+)-binding residues include Asn-182, Glu-185, and Glu-214. Glu-185 provides a ligand contact to Zn(2+). Transmembrane regions (helical) follow at residues 204–224 (FLYS…GYTL), 228–248 (IFND…MVFI), and 265–285 (LAIY…LLFI).

The protein belongs to the ZIP transporter (TC 2.A.5) family. ZupT subfamily.

It is found in the cell membrane. The catalysed reaction is Zn(2+)(in) = Zn(2+)(out). In terms of biological role, mediates zinc uptake. May also transport other divalent cations. This is Zinc transporter ZupT from Clostridium perfringens (strain 13 / Type A).